Consider the following 278-residue polypeptide: Large ribosomal subunit protein uL2 (278 aa).

2 disordered regions span residues 29 to 53 (PVKSLTEGKRKTGGRNNKGHVTSRG) and 221 to 278 (RGVA…KKKR). Basic residues predominate over residues 269–278 (IRSRHAKKKR).

This sequence belongs to the universal ribosomal protein uL2 family. In terms of assembly, part of the 50S ribosomal subunit. Forms a bridge to the 30S subunit in the 70S ribosome.

One of the primary rRNA binding proteins. Required for association of the 30S and 50S subunits to form the 70S ribosome, for tRNA binding and peptide bond formation. It has been suggested to have peptidyltransferase activity; this is somewhat controversial. Makes several contacts with the 16S rRNA in the 70S ribosome. The sequence is that of Large ribosomal subunit protein uL2 from Erythrobacter litoralis (strain HTCC2594).